A 382-amino-acid polypeptide reads, in one-letter code: MRPLDVTPTISPGAQDLPRTMHFAAEPPLQPLIIDITEEEKLEITYIGKKLKRKYKSYDDPGFISMLHLNAYTLLPERIAKVLSNFGTDFSDQQYGAVVLRGLIEIGQDELGPTPRSWQETDHEKIMEYGFISSLLHGAVPSKPVEYFAQRKGGGLMHAIIPDENMSFTQTGSGSRTDLFVHTEDAFLHNAADFLSFLFLRNEERVPSTLYSIRSHGRPDAILQELFKPIYKCPKDANYASEEALGDDIRTSVLYGSRSAPFMRFDAAEQIYNEDANQDPEALHNLKRFWEEARKLIYNDFVPESGDLIFVNNHLCAHGRNAFLAGFREENGQLVKCERRLMLRMMSKTSLINIREVTHPENPYLIMEEHYGKVYSAHLANL.

Histidine 182, glutamate 184, and histidine 318 together coordinate Fe cation.

It belongs to the clavaminate synthase family. Requires Fe(2+) as cofactor.

The enzyme catalyses L-lysine + 2-oxoglutarate + O2 = (4R)-4-hydroxy-L-lysine + succinate + CO2. In terms of biological role, alpha-ketoglutarate-dependent dioxygenase that in vitro catalyzes the regio- and stereoselective hydroxylation of L-lysine, leading to (4R)-4-hydroxy-L-lysine. Cannot use D-lysine or L-ornithine as substrate. This chain is L-lysine 4-hydroxylase, found in Chitinophaga pinensis (strain ATCC 43595 / DSM 2588 / LMG 13176 / NBRC 15968 / NCIMB 11800 / UQM 2034).